A 182-amino-acid polypeptide reads, in one-letter code: Putative manganese efflux pump MntP (182 aa).

Helical transmembrane passes span Leu-6–Gly-26, Ile-37–Val-57, His-71–Leu-91, Ile-101–Leu-121, Ile-131–Ile-151, and Tyr-162–Ile-182.

This sequence belongs to the MntP (TC 9.B.29) family.

It is found in the cell membrane. Functionally, probably functions as a manganese efflux pump. The sequence is that of Putative manganese efflux pump MntP from Bacillus anthracis (strain A0248).